The following is a 264-amino-acid chain: tRNA pseudouridine synthase A (264 aa).

The Nucleophile role is filled by aspartate 56. Tyrosine 114 lines the substrate pocket.

This sequence belongs to the tRNA pseudouridine synthase TruA family. As to quaternary structure, homodimer.

It carries out the reaction uridine(38/39/40) in tRNA = pseudouridine(38/39/40) in tRNA. Formation of pseudouridine at positions 38, 39 and 40 in the anticodon stem and loop of transfer RNAs. The protein is tRNA pseudouridine synthase A of Buchnera aphidicola subsp. Baizongia pistaciae (strain Bp).